Reading from the N-terminus, the 577-residue chain is Aspartate--tRNA(Asp/Asn) ligase (577 aa).

Residue E171 coordinates L-aspartate. The tract at residues 195 to 198 (QLFK) is aspartate. R217 contacts L-aspartate. Residues 217 to 219 (RDE) and Q226 each bind ATP. H444 contacts L-aspartate. E474 contributes to the ATP binding site. R481 lines the L-aspartate pocket. Residue 526-529 (GFDR) coordinates ATP.

It belongs to the class-II aminoacyl-tRNA synthetase family. Type 1 subfamily. As to quaternary structure, homodimer.

The protein localises to the cytoplasm. The catalysed reaction is tRNA(Asx) + L-aspartate + ATP = L-aspartyl-tRNA(Asx) + AMP + diphosphate. Functionally, aspartyl-tRNA synthetase with relaxed tRNA specificity since it is able to aspartylate not only its cognate tRNA(Asp) but also tRNA(Asn). Reaction proceeds in two steps: L-aspartate is first activated by ATP to form Asp-AMP and then transferred to the acceptor end of tRNA(Asp/Asn). The chain is Aspartate--tRNA(Asp/Asn) ligase from Helicobacter pylori (strain G27).